Reading from the N-terminus, the 446-residue chain is Phosphoglucosamine mutase (446 aa).

The active-site Phosphoserine intermediate is the Ser-103. Positions 103, 242, 244, and 246 each coordinate Mg(2+). The residue at position 103 (Ser-103) is a Phosphoserine.

This sequence belongs to the phosphohexose mutase family. Mg(2+) is required as a cofactor. Post-translationally, activated by phosphorylation.

It catalyses the reaction alpha-D-glucosamine 1-phosphate = D-glucosamine 6-phosphate. In terms of biological role, catalyzes the conversion of glucosamine-6-phosphate to glucosamine-1-phosphate. The chain is Phosphoglucosamine mutase from Vibrio vulnificus (strain CMCP6).